The chain runs to 388 residues: MNLHEYQAKSLFAEYGLPVSEGFACDTAQEAVEAAGHIGGDMWVVKCQVHAGGRGKAGGVKVTGDKNEIRAFAEHWLGKNLVTYQTDEKGQPVAKILVESCTDIANELYLGAVVDRASRRVVFMASTEGGVEIETVAEETPELIHKAIIDPLAGPQPYQARDLGFKLGLNPTQLKQFTKVFMGLAKMFEDHDFALLEINPLVITDEGNIHCLDGKIGIDGNALYRQPKIREMHDPSQDDAREAHAAKFELNYVALDGNVGCMVNGAGLAMGTMDIVNLHGGKPANFLDVGGGATKERVAEAFKIILSDDNVKAVLVNIFGGIVRCDMIAEGIIGAVKEVGVTVPVVVRLEGTNADLGREVLANSDLDIIAATSLTDAAEQVVKAAEGK.

One can recognise an ATP-grasp domain in the interval 9–244; the sequence is KSLFAEYGLP…PSQDDAREAH (236 aa). Residues Lys46, 53–55, Glu99, Thr102, and Glu107 each bind ATP; that span reads GRG. The Mg(2+) site is built by Asn199 and Asp213. Residues Asn264 and 321–323 each bind substrate; that span reads GIV.

Belongs to the succinate/malate CoA ligase beta subunit family. In terms of assembly, heterotetramer of two alpha and two beta subunits. The cofactor is Mg(2+).

It carries out the reaction succinate + ATP + CoA = succinyl-CoA + ADP + phosphate. It catalyses the reaction GTP + succinate + CoA = succinyl-CoA + GDP + phosphate. The protein operates within carbohydrate metabolism; tricarboxylic acid cycle; succinate from succinyl-CoA (ligase route): step 1/1. Its function is as follows. Succinyl-CoA synthetase functions in the citric acid cycle (TCA), coupling the hydrolysis of succinyl-CoA to the synthesis of either ATP or GTP and thus represents the only step of substrate-level phosphorylation in the TCA. The beta subunit provides nucleotide specificity of the enzyme and binds the substrate succinate, while the binding sites for coenzyme A and phosphate are found in the alpha subunit. This chain is Succinate--CoA ligase [ADP-forming] subunit beta, found in Shewanella woodyi (strain ATCC 51908 / MS32).